Consider the following 1184-residue polypeptide: MFQLRNFEAIKIGLASPEKIREWSRGEVKKPETINYRTLKPERDGLFCERIFGPTKDWECHCGKYKRVRYKGVVCDRCGVEVTRSKVRRERMGHIELAAPVAHIWYVKGIPSRMGLLLDMSPRALEKVLYFVSYVVIDPGDTPLTKKQLLSEKEYREYLDKYGNKFRAGMGAEAIKELLQEIDLEKLSKELKAEIRESTGQKRVRAIRRLEVVQAFIDSGNRPEWMILDVIPVIPPDLRPMVQLDGGRFATSDLNDLYRRVINRNNRLKKLLDLGAPDIIVRNEKRMLQEAVDALIDNGRRGRPVTGPGNRPLKSLSDMLKGKQGRFRQNLLGKRVDYSGRSVIVVGPELKVYQCGLPKEMALELFKPFVMKKLVDEGLAQHIKSAKRMVEKIKPEVWDVLEEVIKEHPVLLNRAPTLHRLGIQAFEPVLVEGRAIKLHPLVCTAYNADFDGDQMAVHVPLSMEAQAEARFLMLAANNILKPQDGKPVMTPTQDMVLGCYYLTADEEGVQGEGKYFSSPEEAITAYQLGYIHIHAKIKVKMTKEIDGVKKSKIIETTVGKIIFNEAIPQDLGYVDRTNPETAFDLEINDLVDKSKLGKILDRVYRLHGPTKTAETLDKIKELGFRYSTKAAITVSVSDMVIPKEKEKLLKEADEMVSKIESQFRRGLISEEERYESIIRTWNMTTEKVTEALMTSLDKFNPIFMMAHSGARGSKNQIRQLAGMRGLMADPSGRIIELPIRSNFREGLNVLEFFISTHGARKGLADTALRTADSGYLTRRLVDVSQDVIVREEDCGTDEGIYVEEIREGNEIIERLADRIIGRVAAEDVVDNEGKIIVRRNELINEEEAEKIEKAGITKVKIRSLLTCKSRHGVCRMCYGRDLATGELVNIGEAVGIIAAQAIGEPGTQLTMRTFHTGGVAGSDITQGLPRVEELFEARKPKGLAVISEISGVVRINESKKRREVIVTDEENSISKTYLIPYGSRLKVHDGQVIQAGDELTEGSVNPHDLLKIKGIFAVQTYLLQEVQKVYRLQGVEINDKHIEVIIRQMMRKVKVEDPGDTSMLPGELIDMFKFEEENKKAVEKGLKPATGRRALLGITKAALATDSFLSAASFQETTRVLTDAAIKGKVDPLLGLKENVIIGKLIPAGTGLSRYRNISVVKKVKDQQDAQDKEKEEAEVKASN.

Zn(2+) is bound by residues cysteine 60, cysteine 62, cysteine 75, and cysteine 78. Residues aspartate 449, aspartate 451, and aspartate 453 each coordinate Mg(2+). Residues cysteine 794, cysteine 867, cysteine 874, and cysteine 877 each coordinate Zn(2+).

This sequence belongs to the RNA polymerase beta' chain family. The RNAP catalytic core consists of 2 alpha, 1 beta, 1 beta' and 1 omega subunit. When a sigma factor is associated with the core the holoenzyme is formed, which can initiate transcription. The cofactor is Mg(2+). It depends on Zn(2+) as a cofactor.

The enzyme catalyses RNA(n) + a ribonucleoside 5'-triphosphate = RNA(n+1) + diphosphate. Its function is as follows. DNA-dependent RNA polymerase catalyzes the transcription of DNA into RNA using the four ribonucleoside triphosphates as substrates. This is DNA-directed RNA polymerase subunit beta' from Thermoanaerobacter sp. (strain X514).